A 468-amino-acid chain; its full sequence is 3-isopropylmalate dehydratase large subunit (468 aa).

Cysteine 349, cysteine 409, and cysteine 412 together coordinate [4Fe-4S] cluster.

Belongs to the aconitase/IPM isomerase family. LeuC type 1 subfamily. In terms of assembly, heterodimer of LeuC and LeuD. [4Fe-4S] cluster is required as a cofactor.

It carries out the reaction (2R,3S)-3-isopropylmalate = (2S)-2-isopropylmalate. It participates in amino-acid biosynthesis; L-leucine biosynthesis; L-leucine from 3-methyl-2-oxobutanoate: step 2/4. In terms of biological role, catalyzes the isomerization between 2-isopropylmalate and 3-isopropylmalate, via the formation of 2-isopropylmaleate. This chain is 3-isopropylmalate dehydratase large subunit, found in Shewanella baltica (strain OS155 / ATCC BAA-1091).